Reading from the N-terminus, the 103-residue chain is Small ribosomal subunit protein uS10 (103 aa).

Belongs to the universal ribosomal protein uS10 family. Part of the 30S ribosomal subunit.

Its function is as follows. Involved in the binding of tRNA to the ribosomes. The polypeptide is Small ribosomal subunit protein uS10 (Neisseria gonorrhoeae (strain ATCC 700825 / FA 1090)).